Consider the following 584-residue polypeptide: Probable DNA ligase (584 aa).

Glutamate 248 provides a ligand contact to ATP. The active-site N6-AMP-lysine intermediate is the lysine 250. ATP contacts are provided by arginine 255, arginine 270, glutamate 299, phenylalanine 339, arginine 416, and lysine 422.

The protein belongs to the ATP-dependent DNA ligase family. Requires Mg(2+) as cofactor.

The enzyme catalyses ATP + (deoxyribonucleotide)n-3'-hydroxyl + 5'-phospho-(deoxyribonucleotide)m = (deoxyribonucleotide)n+m + AMP + diphosphate.. DNA ligase that seals nicks in double-stranded DNA during DNA replication, DNA recombination and DNA repair. This Aquifex aeolicus (strain VF5) protein is Probable DNA ligase.